The sequence spans 298 residues: Junctional adhesion molecule B (298 aa).

An N-terminal signal peptide occupies residues 1–28 (MARRSRHRLLLLLLRYLVVALGYHKAYG). The Extracellular segment spans residues 29 to 238 (FSAPKDQQVV…RMQVDDLNIS (210 aa)). The Ig-like V-type domain maps to 32–127 (PKDQQVVTAV…GQNLEEDTVT (96 aa)). 2 disulfides stabilise this stretch: Cys50–Cys109 and Cys155–Cys214. Residues Asn98, Asn187, and Asn236 are each glycosylated (N-linked (GlcNAc...) asparagine). The Ig-like C2-type domain maps to 134–238 (PAVPSCEVPS…RMQVDDLNIS (105 aa)). A helical transmembrane segment spans residues 239-259 (GIIAAVVVVALVISVCGLGVC). Residues 260–298 (YAQRKGYFSKETSFQKSNSSSKATTMSENDFKHTKSFII) lie on the Cytoplasmic side of the membrane.

Belongs to the immunoglobulin superfamily. As to expression, highly expressed in heart, placenta, lung, foreskin and lymph node. Prominently expressed on high endothelial venules and also present on the endothelia of other vessels (at protein level). Also expressed in the brain in the caudate nuclei.

The protein localises to the cell membrane. Its subcellular location is the cell junction. It localises to the tight junction. Its function is as follows. Junctional adhesion protein that mediates heterotypic cell-cell interactions with its cognate receptor JAM3 to regulate different cellular processes. Plays a role in homing and mobilization of hematopoietic stem and progenitor cells within the bone marrow. At the surface of bone marrow stromal cells, it contributes to the retention of the hematopoietic stem and progenitor cells expressing JAM3. Plays a central role in leukocytes extravasation by facilitating not only transmigration but also tethering and rolling of leukocytes along the endothelium. Tethering and rolling of leukocytes are dependent on the binding by JAM2 of the integrin alpha-4/beta-1. Plays a role in spermatogenesis where JAM2 and JAM3, which are respectively expressed by Sertoli and germ cells, mediate an interaction between both cell types and play an essential role in the anchorage of germ cells onto Sertoli cells and the assembly of cell polarity complexes during spermatid differentiation. Also functions as an inhibitory somatodendritic cue that prevents the myelination of non-axonal parts of neurons. During myogenesis, it is involved in myocyte fusion. May also play a role in angiogenesis. The sequence is that of Junctional adhesion molecule B from Homo sapiens (Human).